We begin with the raw amino-acid sequence, 124 residues long: Small ribosomal subunit protein uS12 (124 aa).

Positions 1 to 30 are disordered; sequence MPTIQQLVRKGRTPKVTKTKAPALKANPQQ. A compositionally biased stretch (basic residues) spans 9-18; the sequence is RKGRTPKVTK.

This sequence belongs to the universal ribosomal protein uS12 family. As to quaternary structure, part of the 30S ribosomal subunit. Contacts proteins S8 and S17. May interact with IF1 in the 30S initiation complex.

Its function is as follows. With S4 and S5 plays an important role in translational accuracy. Interacts with and stabilizes bases of the 16S rRNA that are involved in tRNA selection in the A site and with the mRNA backbone. Located at the interface of the 30S and 50S subunits, it traverses the body of the 30S subunit contacting proteins on the other side and probably holding the rRNA structure together. The combined cluster of proteins S8, S12 and S17 appears to hold together the shoulder and platform of the 30S subunit. The chain is Small ribosomal subunit protein uS12 from Leifsonia xyli subsp. xyli (strain CTCB07).